The primary structure comprises 244 residues: Ribonuclease 3 (244 aa).

An RNase III domain is found at 21-148; the sequence is DHAPLLEAWG…MLGAIYLHHG (128 aa). E61 is a Mg(2+) binding site. Residue D65 is part of the active site. Mg(2+)-binding residues include D134 and E137. The active site involves E137. A DRBM domain is found at 175 to 242; the sequence is DWKTVLLEKL…AKQAVQKLNE (68 aa).

It belongs to the ribonuclease III family. In terms of assembly, homodimer. Requires Mg(2+) as cofactor.

It is found in the cytoplasm. It catalyses the reaction Endonucleolytic cleavage to 5'-phosphomonoester.. In terms of biological role, digests double-stranded RNA. Involved in the processing of primary rRNA transcript to yield the immediate precursors to the large and small rRNAs (23S and 16S). Processes some mRNAs, and tRNAs when they are encoded in the rRNA operon. Processes pre-crRNA and tracrRNA of type II CRISPR loci if present in the organism. The polypeptide is Ribonuclease 3 (Corynebacterium jeikeium (strain K411)).